The sequence spans 353 residues: Cyclic GMP-AMP synthase-like receptor (353 aa).

ATP is bound by residues S60 and 72–74 (EYD). E72, D74, and D183 together coordinate Mg(2+). A GTP-binding site is contributed by D183. K245 contacts ATP. Residues L269 and E270 each contribute to the Mn(2+) site.

It belongs to the mab-21 family. Mg(2+) is required as a cofactor. Mn(2+) serves as cofactor.

It catalyses the reaction GTP + ATP = 2',3'-cGAMP + 2 diphosphate. The enzyme catalyses GTP + ATP = pppGp(2'-5')A + diphosphate. The catalysed reaction is pppGp(2'-5')A = 2',3'-cGAMP + diphosphate. Its function is as follows. Nucleotidyltransferase that catalyzes the formation of cyclic GMP-AMP (2',3'-cGAMP) from ATP and GTP and plays a key role in innate immunity. Acts as a key sensor of double-stranded RNA (dsRNA), the presence of dsRNA in the cytoplasm being a danger signal that triggers the immune responses. Directly binds dsRNA, activating the nucleotidyltransferase activity, leading to synthesis of 2',3'-cGAMP, a second messenger that binds to and activates Sting, thereby triggering the immune response via activation of the NF-kappa-B transcription factor. The chain is Cyclic GMP-AMP synthase-like receptor from Nicrophorus vespilloides (Boreal carrion beetle).